Here is a 90-residue protein sequence, read N- to C-terminus: MARTVFCEYLKKEAEGLDFQLYPGELGKRIFDSVSKQAWGEWIKKQTMLVNEKKLNMMNAEHRKLLEQEMVNFLFEGKDVHIEGYVPPSN.

The protein belongs to the Fe(2+)-trafficking protein family.

Its function is as follows. Could be a mediator in iron transactions between iron acquisition and iron-requiring processes, such as synthesis and/or repair of Fe-S clusters in biosynthetic enzymes. In Haemophilus influenzae (strain 86-028NP), this protein is Probable Fe(2+)-trafficking protein.